A 67-amino-acid chain; its full sequence is SSGPCCDRCRCTKSEPPQCQCQDVRLNSCHSACEACVCSHSMPGLCSCLDITHFCHEPCKSSGDDED.

7 cysteine pairs are disulfide-bonded: C5/C59, C6/C21, C9/C55, C11/C19, C29/C36, C33/C48, and C38/C46.

This sequence belongs to the Bowman-Birk serine protease inhibitor family. Monomer. Although dimerization may occur in solution. As to expression, seed.

Functionally, inhibits trypsin but not chymotrypsin. The inhibitor consists of 2 domains and has 2 sites of interaction with trypsin. This chain is Bowman-Birk type proteinase inhibitor 1, found in Dioclea glabra.